Consider the following 1152-residue polypeptide: DNA-directed RNA polymerase subunit beta' (1152 aa).

Cys-60, Cys-62, Cys-75, and Cys-78 together coordinate Zn(2+). 3 residues coordinate Mg(2+): Asp-449, Asp-451, and Asp-453. Cys-779, Cys-853, Cys-860, and Cys-863 together coordinate Zn(2+).

This sequence belongs to the RNA polymerase beta' chain family. As to quaternary structure, the RNAP catalytic core consists of 2 alpha, 1 beta, 1 beta' and 1 omega subunit. When a sigma factor is associated with the core the holoenzyme is formed, which can initiate transcription. The cofactor is Mg(2+). Zn(2+) is required as a cofactor.

It carries out the reaction RNA(n) + a ribonucleoside 5'-triphosphate = RNA(n+1) + diphosphate. Its function is as follows. DNA-dependent RNA polymerase catalyzes the transcription of DNA into RNA using the four ribonucleoside triphosphates as substrates. This Carboxydothermus hydrogenoformans (strain ATCC BAA-161 / DSM 6008 / Z-2901) protein is DNA-directed RNA polymerase subunit beta'.